A 915-amino-acid polypeptide reads, in one-letter code: Protein translocase subunit SecA (915 aa).

Residues glutamine 87, 105 to 109 (GEGKT), and aspartate 516 contribute to the ATP site. The segment at 866–915 (MTYGAPSDGDIGGSVEDEPLELPEGARVGRNDPCPCGSGKKYKQCHGKLS) is disordered. Cysteine 899, cysteine 901, cysteine 910, and histidine 911 together coordinate Zn(2+). Over residues 905-915 (KKYKQCHGKLS) the composition is skewed to basic residues.

Belongs to the SecA family. Monomer and homodimer. Part of the essential Sec protein translocation apparatus which comprises SecA, SecYEG and auxiliary proteins SecDF-YajC and YidC. The cofactor is Zn(2+).

The protein resides in the cell inner membrane. The protein localises to the cytoplasm. The catalysed reaction is ATP + H2O + cellular proteinSide 1 = ADP + phosphate + cellular proteinSide 2.. Part of the Sec protein translocase complex. Interacts with the SecYEG preprotein conducting channel. Has a central role in coupling the hydrolysis of ATP to the transfer of proteins into and across the cell membrane, serving both as a receptor for the preprotein-SecB complex and as an ATP-driven molecular motor driving the stepwise translocation of polypeptide chains across the membrane. This chain is Protein translocase subunit SecA, found in Delftia acidovorans (strain DSM 14801 / SPH-1).